A 259-amino-acid chain; its full sequence is Phosphatidylglycerol--prolipoprotein diacylglyceryl transferase (259 aa).

Helical transmembrane passes span 16-36 (LAIS…WFYA), 55-75 (FITY…VLLY), 92-112 (EGGM…YLFC), and 117-137 (INFL…LFLG). Residue arginine 138 participates in a 1,2-diacyl-sn-glycero-3-phospho-(1'-sn-glycerol) binding. 3 helical membrane-spanning segments follow: residues 172 to 192 (QLYE…YATF), 201 to 221 (GLNS…IEIF), and 228 to 248 (IGFI…MLLL).

Belongs to the Lgt family.

The protein localises to the cell inner membrane. It carries out the reaction L-cysteinyl-[prolipoprotein] + a 1,2-diacyl-sn-glycero-3-phospho-(1'-sn-glycerol) = an S-1,2-diacyl-sn-glyceryl-L-cysteinyl-[prolipoprotein] + sn-glycerol 1-phosphate + H(+). Its pathway is protein modification; lipoprotein biosynthesis (diacylglyceryl transfer). Its function is as follows. Catalyzes the transfer of the diacylglyceryl group from phosphatidylglycerol to the sulfhydryl group of the N-terminal cysteine of a prolipoprotein, the first step in the formation of mature lipoproteins. The chain is Phosphatidylglycerol--prolipoprotein diacylglyceryl transferase from Rickettsia rickettsii (strain Iowa).